The following is a 304-amino-acid chain: Acetyl-coenzyme A carboxylase carboxyl transferase subunit beta (304 aa).

In terms of domain architecture, CoA carboxyltransferase N-terminal spans 26 to 295 (VWTKCTSCEQ…PFVEPELVEN (270 aa)). Positions 30, 33, 49, and 52 each coordinate Zn(2+). The segment at 30–52 (CTSCEQVLYRDELRRHLEVCPKC) adopts a C4-type zinc-finger fold. The interval 281–304 (SNKPSPFVEPELVENEEQSKSDNE) is disordered.

Belongs to the AccD/PCCB family. As to quaternary structure, acetyl-CoA carboxylase is a heterohexamer composed of biotin carboxyl carrier protein (AccB), biotin carboxylase (AccC) and two subunits each of ACCase subunit alpha (AccA) and ACCase subunit beta (AccD). Zn(2+) serves as cofactor.

It is found in the cytoplasm. It carries out the reaction N(6)-carboxybiotinyl-L-lysyl-[protein] + acetyl-CoA = N(6)-biotinyl-L-lysyl-[protein] + malonyl-CoA. Its pathway is lipid metabolism; malonyl-CoA biosynthesis; malonyl-CoA from acetyl-CoA: step 1/1. Its function is as follows. Component of the acetyl coenzyme A carboxylase (ACC) complex. Biotin carboxylase (BC) catalyzes the carboxylation of biotin on its carrier protein (BCCP) and then the CO(2) group is transferred by the transcarboxylase to acetyl-CoA to form malonyl-CoA. The protein is Acetyl-coenzyme A carboxylase carboxyl transferase subunit beta of Pasteurella multocida (strain Pm70).